The primary structure comprises 72 residues: Large ribosomal subunit protein bL31c (72 aa).

This sequence belongs to the bacterial ribosomal protein bL31 family. Type A subfamily. In terms of assembly, part of the 50S ribosomal subunit.

The protein resides in the plastid. The protein localises to the chloroplast. Binds the 23S rRNA. This Trieres chinensis (Marine centric diatom) protein is Large ribosomal subunit protein bL31c.